We begin with the raw amino-acid sequence, 305 residues long: Probable branched-chain-amino-acid aminotransferase (305 aa).

N6-(pyridoxal phosphate)lysine is present on Lys-156.

Belongs to the class-IV pyridoxal-phosphate-dependent aminotransferase family. Requires pyridoxal 5'-phosphate as cofactor.

It carries out the reaction L-leucine + 2-oxoglutarate = 4-methyl-2-oxopentanoate + L-glutamate. The enzyme catalyses L-isoleucine + 2-oxoglutarate = (S)-3-methyl-2-oxopentanoate + L-glutamate. It catalyses the reaction L-valine + 2-oxoglutarate = 3-methyl-2-oxobutanoate + L-glutamate. It functions in the pathway amino-acid biosynthesis; L-isoleucine biosynthesis; L-isoleucine from 2-oxobutanoate: step 4/4. It participates in amino-acid biosynthesis; L-leucine biosynthesis; L-leucine from 3-methyl-2-oxobutanoate: step 4/4. Its pathway is amino-acid biosynthesis; L-valine biosynthesis; L-valine from pyruvate: step 4/4. Its function is as follows. Acts on leucine, isoleucine and valine. This is Probable branched-chain-amino-acid aminotransferase (ilvE) from Synechocystis sp. (strain ATCC 27184 / PCC 6803 / Kazusa).